The primary structure comprises 205 residues: tRNA (guanine-N(7)-)-methyltransferase (205 aa).

Glutamate 34, glutamate 59, aspartate 86, and aspartate 107 together coordinate S-adenosyl-L-methionine. The active site involves aspartate 107. Lysine 111 serves as a coordination point for substrate. Positions 113 to 118 (RHEKRR) are interaction with RNA. Substrate is bound by residues aspartate 144 and 182–185 (TGYE).

It belongs to the class I-like SAM-binding methyltransferase superfamily. TrmB family.

The catalysed reaction is guanosine(46) in tRNA + S-adenosyl-L-methionine = N(7)-methylguanosine(46) in tRNA + S-adenosyl-L-homocysteine. The protein operates within tRNA modification; N(7)-methylguanine-tRNA biosynthesis. Its function is as follows. Catalyzes the formation of N(7)-methylguanine at position 46 (m7G46) in tRNA. This Mycoplasmopsis synoviae (strain 53) (Mycoplasma synoviae) protein is tRNA (guanine-N(7)-)-methyltransferase.